The following is a 176-amino-acid chain: Beta-carotene hydroxylase (176 aa).

The region spanning 10–126 (LSVIAMEGIA…AHRLHHAVRG (117 aa)) is the Fatty acid hydroxylase domain. The tract at residues 152–176 (HGRPPKRDAAKDRPDAASPSSSSPE) is disordered. The span at 156–166 (PKRDAAKDRPD) shows a compositional bias: basic and acidic residues. Over residues 167-176 (AASPSSSSPE) the composition is skewed to low complexity.

This sequence belongs to the sterol desaturase family.

The protein operates within carotenoid biosynthesis; zeaxanthin biosynthesis. Its function is as follows. Catalyzes the hydroxylation reaction from beta-carotene to zeaxanthin. The polypeptide is Beta-carotene hydroxylase (crtZ) (Pseudescherichia vulneris (Escherichia vulneris)).